Here is a 153-residue protein sequence, read N- to C-terminus: Protein Smg homolog (153 aa).

Belongs to the Smg family.

This chain is Protein Smg homolog, found in Neisseria gonorrhoeae (strain ATCC 700825 / FA 1090).